Here is a 255-residue protein sequence, read N- to C-terminus: MERWTGRVALVTGASVGIGAAVARALVQHGMKVVGCARSVDKIEKLAAECQSAGYPGTLIPYKCDLSNEEEILSMFSAIKTLHQGVDVCINNAGLARPEPLLSGKTEGWRTMIDVNVMAVSICTREAYQSMKERNIDDGHIININSMNGHSVVPQSVVHFYSATKYAVTALTEGLRQELREAKTHIRATCISPGLVETGFAFKLHDNDPERAAATYESIRCLKAEDMANAVIYVLSAPPHVQIGDIQMRPTEQIS.

The signal sequence occupies residues 1–23 (MERWTGRVALVTGASVGIGAAVA). NADP(+)-binding positions include 13–18 (GASVGI), 38–39 (RS), E44, 65–66 (DL), and N92. Residues S146 and Y161 each contribute to the substrate site. Residues Y161, K165, 196-199 (VETG), and K203 contribute to the NADP(+) site. The active-site Proton acceptor is Y161.

It belongs to the short-chain dehydrogenases/reductases (SDR) family.

The protein localises to the secreted. The catalysed reaction is a 3beta-hydroxysteroid + NADP(+) = a 3-oxosteroid + NADPH + H(+). It carries out the reaction 17beta-estradiol + NAD(+) = estrone + NADH + H(+). The enzyme catalyses 17beta-estradiol + NADP(+) = estrone + NADPH + H(+). The protein operates within steroid biosynthesis; estrogen biosynthesis. With respect to regulation, inhibited by flavonoids including apigenin, luteolin, genistein, kaempferol and quercetin and also by carbenoxolone, zearalenone, glycyrrhetinic, curcumin and flufenamic acid. Catalyzes the conversion of the 17-keto group of estrone, 4- and 5-androstenes and 5-alpha-androstanes into their 17-beta-hydroxyl metabolites and the conversion of the 3-keto group of 3-, 3,17- and 3,20- diketosteroids into their 3-hydroxyl metabolites. Exhibits reductive 3-beta-hydroxysteroid dehydrogenase activity toward 5-beta-androstanes, 5-beta-pregnanes, 4-pregnenes and bile acids. May also reduce endogenous and exogenous alpha-dicarbonyl compounds and xenobiotic alicyclic ketones. The protein is Dehydrogenase/reductase SDR family member 11 (DHRS11) of Gallus gallus (Chicken).